We begin with the raw amino-acid sequence, 537 residues long: Ribonuclease III domain-containing protein RNC1, chloroplastic (537 aa).

Residues Met1–Cys51 constitute a chloroplast transit peptide. 2 RNase III domains span residues Leu141–Gly283 and Glu415–Gly515.

Interacts with RNA. Part of large ribonucleo-protein particles that contain CAF1 and/or CAF2.

The protein resides in the plastid. It is found in the chloroplast. Binds specific group II introns in chloroplasts and facilitates their splicing. Acts on both subgroup IIA and subgroup IIB introns. The substrates of the subgroup II also require the CRM domain proteins CAF1 or CAF2. Binds both single-stranded and double-stranded RNA non-specifically, but lacks endonuclease activity. Required for plastid ribosome biogenesis. The polypeptide is Ribonuclease III domain-containing protein RNC1, chloroplastic (Arabidopsis thaliana (Mouse-ear cress)).